The primary structure comprises 258 residues: Acidic leucine-rich nuclear phosphoprotein 32 family member E (258 aa).

Position 1 is an N-acetylmethionine (M1). LRR repeat units follow at residues 18 to 38 (EVTE…EGLN), 43 to 64 (ELEF…PSLN), 65 to 87 (KLRK…AEKC), and 89 to 110 (NLTY…EALQ). K68 is covalently cross-linked (Glycyl lysine isopeptide (Lys-Gly) (interchain with G-Cter in SUMO2)). Residues 123-161 (CEITNLEDYRESIFELLQQITYLDGFDQEDNEAPDSEEE) form the LRRCT domain. 2 stretches are compositionally biased toward acidic residues: residues 149 to 206 (DQED…EEEV) and 216 to 238 (IQDE…EEEE). A disordered region spans residues 149–258 (DQEDNEAPDS…AEDDGEEDDD (110 aa)). Positions 205 to 258 (EVGLSYLMKEEIQDEEDDDDYVDEGEEEEEEEEEGPRGEKRKRDAEDDGEEDDD) are ZID domain. Positions 239–249 (GPRGEKRKRDA) are enriched in basic and acidic residues.

This sequence belongs to the ANP32 family. Component of a SWR1-like complex, composed of EP400, KAT5/TIP60, TRRAP, BRD8, RUVBL1, RUVBL2, ING3 and ANP32E; the complex does not contain SRCAP. Interacts with H2A.Z/H2AZ1. Interacts with the importin alpha KPNA1 and KPNA2. In terms of processing, phosphorylated. The phosphorylation is nuclear localization signal (NLS)-dependent.

It is found in the cytoplasm. Its subcellular location is the nucleus. Its function is as follows. Histone chaperone that specifically mediates the genome-wide removal of histone H2A.Z/H2AZ1 from the nucleosome: removes H2A.Z/H2AZ1 from its normal sites of deposition, especially from enhancer and insulator regions. Not involved in deposition of H2A.Z/H2AZ1 in the nucleosome. May stabilize the evicted H2A.Z/H2AZ1-H2B dimer, thus shifting the equilibrium towards dissociation and the off-chromatin state. Inhibits activity of protein phosphatase 2A (PP2A). Does not inhibit protein phosphatase 1. May play a role in cerebellar development and synaptogenesis. This is Acidic leucine-rich nuclear phosphoprotein 32 family member E (Anp32e) from Rattus norvegicus (Rat).